The chain runs to 445 residues: MDIRQVRETIEMIEEQNFDIRTITMGISLLDCIDSDIDKAAEKVYTKIVTKAKNLVAVGDEIAAELGIPIVNKRVSVTPIALIGAATDATDYLPLAHALDKAAHEIGIDFIGGFSALAQKGYQKGDEILINSIPQALAQTSKVCSSVNIGSTKTGINMTAVRDMGRIIKETAEASDMGAAKLVVFANAVEDNPFMAGAFHGVGEADVVINVGVSGPGVVKRALEKVRGESFDVVAETVKKTAFKITRIGQLVGNMASERLGVKFGIVDLSLAPTPAVGDSVARVLEEMGLETVGTHGTTAALALLNDAVKKGGVMACNQVGGLSGAFIPVSEDEGMIAAVQNGSLNLEKLEAMTAICSVGLDMIAIPETTPAETIAAMIADEAAIGVINQKTTAVRIIPLGKEGDMIEFGGLLGTAPVMKVNQASSVDFINRGGQIPAPIHSFKN.

This sequence belongs to the UPF0210 family. Homodimer.

The polypeptide is UPF0210 protein SSU05_0296 (Streptococcus suis (strain 05ZYH33)).